The chain runs to 619 residues: 1-deoxy-D-xylulose-5-phosphate synthase (619 aa).

Thiamine diphosphate is bound by residues histidine 74 and 115 to 117; that span reads GHS. Aspartate 146 provides a ligand contact to Mg(2+). Residues 147-148, asparagine 175, and tyrosine 285 each bind thiamine diphosphate; that span reads GA. Asparagine 175 lines the Mg(2+) pocket. The disordered stretch occupies residues 289 to 310; it reads EKSPSKYHGIPPSNDKKEEPNK. Thiamine diphosphate is bound at residue glutamate 365.

The protein belongs to the transketolase family. DXPS subfamily. Homodimer. Mg(2+) is required as a cofactor. Thiamine diphosphate serves as cofactor.

It carries out the reaction D-glyceraldehyde 3-phosphate + pyruvate + H(+) = 1-deoxy-D-xylulose 5-phosphate + CO2. Its pathway is metabolic intermediate biosynthesis; 1-deoxy-D-xylulose 5-phosphate biosynthesis; 1-deoxy-D-xylulose 5-phosphate from D-glyceraldehyde 3-phosphate and pyruvate: step 1/1. Its function is as follows. Catalyzes the acyloin condensation reaction between C atoms 2 and 3 of pyruvate and glyceraldehyde 3-phosphate to yield 1-deoxy-D-xylulose-5-phosphate (DXP). In Clostridium botulinum (strain Alaska E43 / Type E3), this protein is 1-deoxy-D-xylulose-5-phosphate synthase.